The chain runs to 433 residues: Protein translocase subunit SecY (433 aa).

10 consecutive transmembrane segments (helical) span residues 17–37 (IIFT…PIAG), 71–91 (IFAL…LMSV), 117–137 (LTVL…ESIV), 141–161 (GPVV…TLVV), 184–204 (LIIF…MFEL), 212–232 (PLVA…IIFF), 268–288 (GVIP…LANF), 309–329 (IYIL…TAIV), 366–386 (LTVV…LLMN), and 388–408 (YVIS…VVLD).

Belongs to the SecY/SEC61-alpha family. As to quaternary structure, component of the Sec protein translocase complex. Heterotrimer consisting of SecY, SecE and SecG subunits. The heterotrimers can form oligomers, although 1 heterotrimer is thought to be able to translocate proteins. Interacts with the ribosome. Interacts with SecDF, and other proteins may be involved. Interacts with SecA.

It localises to the cell inner membrane. Its function is as follows. The central subunit of the protein translocation channel SecYEG. Consists of two halves formed by TMs 1-5 and 6-10. These two domains form a lateral gate at the front which open onto the bilayer between TMs 2 and 7, and are clamped together by SecE at the back. The channel is closed by both a pore ring composed of hydrophobic SecY resides and a short helix (helix 2A) on the extracellular side of the membrane which forms a plug. The plug probably moves laterally to allow the channel to open. The ring and the pore may move independently. The protein is Protein translocase subunit SecY of Rickettsia bellii (strain RML369-C).